An 84-amino-acid polypeptide reads, in one-letter code: Trefoil factor 1 (84 aa).

The first 24 residues, 1–24, serve as a signal peptide directing secretion; the sequence is MATMENKVICALVLVSMLALGTLA. The P-type domain maps to 29-72; it reads ETCTVAPRERQNCGFPGVTPSQCANKGCCFDDTVRGVPWCFYPN. 3 disulfide bridges follow: Cys-31–Cys-57, Cys-41–Cys-56, and Cys-51–Cys-68.

Heterodimer with GKN2; disulfide linked. As to expression, found in stomach, with highest levels in the upper gastric mucosal cells (at protein level). Detected in goblet cells of the small and large intestine and rectum, small submucosal glands in the esophagus, mucous acini of the sublingual gland, submucosal glands of the trachea, and epithelial cells lining the exocrine pancreatic ducts but not in the remainder of the pancreas (at protein level). Scattered expression is detected in the epithelial cells of the gallbladder and submucosal glands of the vagina, and weak expression is observed in the bronchial goblet cells of the pseudostratified epithelia in the respiratory system (at protein level). Detected in urine (at protein level). Strongly expressed in breast cancer but at low levels in normal mammary tissue. It is regulated by estrogen in MCF-7 cells. Strong expression found in normal gastric mucosa and in the regenerative tissues surrounding ulcerous lesions of gastrointestinal tract, but lower expression found in gastric cancer (at protein level).

Its subcellular location is the secreted. In terms of biological role, stabilizer of the mucous gel overlying the gastrointestinal mucosa that provides a physical barrier against various noxious agents. May inhibit the growth of calcium oxalate crystals in urine. In Homo sapiens (Human), this protein is Trefoil factor 1 (TFF1).